Reading from the N-terminus, the 360-residue chain is Uroporphyrinogen decarboxylase (360 aa).

Substrate-binding positions include 31–35, Asp-81, Tyr-157, Thr-212, and His-333; that span reads RQAGR.

The protein belongs to the uroporphyrinogen decarboxylase family. As to quaternary structure, homodimer.

The protein localises to the cytoplasm. The catalysed reaction is uroporphyrinogen III + 4 H(+) = coproporphyrinogen III + 4 CO2. It participates in porphyrin-containing compound metabolism; protoporphyrin-IX biosynthesis; coproporphyrinogen-III from 5-aminolevulinate: step 4/4. In terms of biological role, catalyzes the decarboxylation of four acetate groups of uroporphyrinogen-III to yield coproporphyrinogen-III. This Janthinobacterium sp. (strain Marseille) (Minibacterium massiliensis) protein is Uroporphyrinogen decarboxylase.